We begin with the raw amino-acid sequence, 255 residues long: 14-3-3 protein epsilon (255 aa).

M1 carries the post-translational modification N-acetylmethionine. K50 bears the N6-acetyllysine; alternate mark. Residue K50 forms a Glycyl lysine isopeptide (Lys-Gly) (interchain with G-Cter in SUMO2); alternate linkage. Position 65 is a phosphoserine (S65). K69, K118, and K123 each carry N6-acetyllysine. Y131 bears the Phosphotyrosine mark. A Phosphothreonine modification is found at T137. S210 bears the Phosphoserine mark. Phosphothreonine is present on T232. A disordered region spans residues 234–255 (DMQGDGEEQNKEALQDVEDENQ).

This sequence belongs to the 14-3-3 family. As to quaternary structure, homodimer. Heterodimerizes with YWHAZ. Interacts with PKA-phosphorylated AANAT. Interacts with ABL1 (phosphorylated form); the interaction retains it in the cytoplasm. Interacts with ARHGEF28. Interacts with BEX3. Weakly interacts with CDKN1B. Interacts with the 'Thr-369' phosphorylated form of DAPK2. Interacts with DENND1A. Interacts with GAB2. Interacts with phosphorylated GRB10. Interacts with KSR1. Interacts with NDEL1. Interacts with PI4KB, TBC1D22A and TBC1D22B. Interacts with the phosphorylated (by AKT1) form of SRPK2. Interacts with TIAM2. Interacts with the 'Ser-1134' and 'Ser-1161' phosphorylated form of SOS1. Interacts with ZFP36 (via phosphorylated form). Interacts with SLITRK1. Interacts with HSF1 (via phosphorylated form); this interaction promotes HSF1 sequestration in the cytoplasm in a ERK-dependent manner. Interacts with RIPOR2. Interacts with KLHL22; required for the nuclear localization of KLHL22 upon amino acid starvation. Interacts with CRTC1. Interacts with CRTC2 (probably when phosphorylated at 'Ser-171'). Interacts with CRTC3 (probably when phosphorylated at 'Ser-162' and/or 'Ser-273'). Interacts with ATP2B1 and ATP2B3; this interaction inhibits calcium-transporting ATPase activity. Interacts with MEFV. Interacts with RNF115. Interacts with GPR15; this interaction promotes ER-to-Golgi transport of GPR15.

It localises to the nucleus. Its subcellular location is the cytoplasm. The protein resides in the melanosome. Functionally, adapter protein implicated in the regulation of a large spectrum of both general and specialized signaling pathways. Binds to a large number of partners, usually by recognition of a phosphoserine or phosphothreonine motif. Binding generally results in the modulation of the activity of the binding partner. Positively regulates phosphorylated protein HSF1 nuclear export to the cytoplasm. The polypeptide is 14-3-3 protein epsilon (Ywhae) (Rattus norvegicus (Rat)).